The following is a 181-amino-acid chain: Regulator of G-protein signaling 5 (181 aa).

The RGS domain occupies 64–180; the sequence is SLDKLLQNNY…VRSEFYQEFI (117 aa).

The protein localises to the cytoplasm. It localises to the membrane. In terms of biological role, inhibits signal transduction by increasing the GTPase activity of G protein alpha subunits thereby driving them into their inactive GDP-bound form. Binds to G(i)-alpha and G(o)-alpha, but not to G(s)-alpha. The polypeptide is Regulator of G-protein signaling 5 (RGS5) (Sus scrofa (Pig)).